We begin with the raw amino-acid sequence, 260 residues long: MESINWNTRSVREELAAVKRAAPFVYGLTNYVAANLSANVLLAVGAAPAIGAAADWPARFGAGAGALWINTAALMSSGADTLRTAARAASETGTRWVLDPVATGAGAPEYDAIVQELLAFRPSVIRGNASELIALAGGTAAGKGVDTTASSDSALAYIGDLARRSGAVVAVSGPIDYVTDGIDTLAIAGGDARLTRVTGAGCALGALIAALLAQRGAALAAAAAAHAIYAIAAERAADARGTGSFAVRFVDELSLLDPGE.

2 residues coordinate ATP: Arg-126 and Ser-172. Gly-199 is a substrate binding site.

The protein belongs to the Thz kinase family. Mg(2+) serves as cofactor.

It catalyses the reaction 5-(2-hydroxyethyl)-4-methylthiazole + ATP = 4-methyl-5-(2-phosphooxyethyl)-thiazole + ADP + H(+). The protein operates within cofactor biosynthesis; thiamine diphosphate biosynthesis; 4-methyl-5-(2-phosphoethyl)-thiazole from 5-(2-hydroxyethyl)-4-methylthiazole: step 1/1. Catalyzes the phosphorylation of the hydroxyl group of 4-methyl-5-beta-hydroxyethylthiazole (THZ). In Burkholderia thailandensis (strain ATCC 700388 / DSM 13276 / CCUG 48851 / CIP 106301 / E264), this protein is Hydroxyethylthiazole kinase.